Consider the following 91-residue polypeptide: Large ribosomal subunit protein eL43 (91 aa).

The C4-type zinc-finger motif lies at 39 to 60 (CSFCGKEAMKRKATGIWNCAKC).

It belongs to the eukaryotic ribosomal protein eL43 family.

The protein is Large ribosomal subunit protein eL43 of Caenorhabditis elegans.